Reading from the N-terminus, the 110-residue chain is Large ribosomal subunit protein uL22 (110 aa).

The protein belongs to the universal ribosomal protein uL22 family. In terms of assembly, part of the 50S ribosomal subunit.

This protein binds specifically to 23S rRNA; its binding is stimulated by other ribosomal proteins, e.g. L4, L17, and L20. It is important during the early stages of 50S assembly. It makes multiple contacts with different domains of the 23S rRNA in the assembled 50S subunit and ribosome. Its function is as follows. The globular domain of the protein is located near the polypeptide exit tunnel on the outside of the subunit, while an extended beta-hairpin is found that lines the wall of the exit tunnel in the center of the 70S ribosome. This is Large ribosomal subunit protein uL22 from Marinomonas sp. (strain MWYL1).